The sequence spans 220 residues: 7-cyano-7-deazaguanine synthase (220 aa).

Phenylalanine 10–leucine 20 serves as a coordination point for ATP. Zn(2+) contacts are provided by cysteine 186, cysteine 195, cysteine 198, and cysteine 201.

This sequence belongs to the QueC family. As to quaternary structure, homodimer. It depends on Zn(2+) as a cofactor.

It catalyses the reaction 7-carboxy-7-deazaguanine + NH4(+) + ATP = 7-cyano-7-deazaguanine + ADP + phosphate + H2O + H(+). It participates in purine metabolism; 7-cyano-7-deazaguanine biosynthesis. In terms of biological role, catalyzes the ATP-dependent conversion of 7-carboxy-7-deazaguanine (CDG) to 7-cyano-7-deazaguanine (preQ(0)). The sequence is that of 7-cyano-7-deazaguanine synthase from Bacillus cereus (strain AH187).